Consider the following 194-residue polypeptide: Peptidyl-tRNA hydrolase (194 aa).

Tyrosine 17 contributes to the tRNA binding site. Histidine 22 (proton acceptor) is an active-site residue. The tRNA site is built by phenylalanine 69, asparagine 71, and asparagine 117.

This sequence belongs to the PTH family. In terms of assembly, monomer.

The protein resides in the cytoplasm. The enzyme catalyses an N-acyl-L-alpha-aminoacyl-tRNA + H2O = an N-acyl-L-amino acid + a tRNA + H(+). Its function is as follows. Hydrolyzes ribosome-free peptidyl-tRNAs (with 1 or more amino acids incorporated), which drop off the ribosome during protein synthesis, or as a result of ribosome stalling. In terms of biological role, catalyzes the release of premature peptidyl moieties from peptidyl-tRNA molecules trapped in stalled 50S ribosomal subunits, and thus maintains levels of free tRNAs and 50S ribosomes. The polypeptide is Peptidyl-tRNA hydrolase (Renibacterium salmoninarum (strain ATCC 33209 / DSM 20767 / JCM 11484 / NBRC 15589 / NCIMB 2235)).